Reading from the N-terminus, the 615-residue chain is 1-deoxy-D-xylulose-5-phosphate synthase (615 aa).

Thiamine diphosphate is bound by residues His-77 and 118–120 (GHS). Position 149 (Asp-149) interacts with Mg(2+). Thiamine diphosphate is bound by residues 150-151 (GA), Asn-178, Tyr-286, and Glu-367. Asn-178 provides a ligand contact to Mg(2+).

The protein belongs to the transketolase family. DXPS subfamily. In terms of assembly, homodimer. The cofactor is Mg(2+). It depends on thiamine diphosphate as a cofactor.

It catalyses the reaction D-glyceraldehyde 3-phosphate + pyruvate + H(+) = 1-deoxy-D-xylulose 5-phosphate + CO2. The protein operates within metabolic intermediate biosynthesis; 1-deoxy-D-xylulose 5-phosphate biosynthesis; 1-deoxy-D-xylulose 5-phosphate from D-glyceraldehyde 3-phosphate and pyruvate: step 1/1. In terms of biological role, catalyzes the acyloin condensation reaction between C atoms 2 and 3 of pyruvate and glyceraldehyde 3-phosphate to yield 1-deoxy-D-xylulose-5-phosphate (DXP). The protein is 1-deoxy-D-xylulose-5-phosphate synthase of Glaesserella parasuis serovar 5 (strain SH0165) (Haemophilus parasuis).